The following is a 180-amino-acid chain: uncharacterized protein (180 aa).

An N-terminal signal peptide occupies residues 1-22; that stretch reads MKLRFISSALAAALFAATGSYA. Cysteines 41 and 81 form a disulfide.

The protein belongs to the fimbrial protein family.

Its subcellular location is the fimbrium. This is an uncharacterized protein from Escherichia coli O157:H7.